A 207-amino-acid polypeptide reads, in one-letter code: Small ribosomal subunit protein uS4 (207 aa).

Residues K31–Q55 form a disordered region. Over residues G42 to G53 the composition is skewed to polar residues. The region spanning S97–L160 is the S4 RNA-binding domain.

It belongs to the universal ribosomal protein uS4 family. In terms of assembly, part of the 30S ribosomal subunit. Contacts protein S5. The interaction surface between S4 and S5 is involved in control of translational fidelity.

In terms of biological role, one of the primary rRNA binding proteins, it binds directly to 16S rRNA where it nucleates assembly of the body of the 30S subunit. With S5 and S12 plays an important role in translational accuracy. The polypeptide is Small ribosomal subunit protein uS4 (Burkholderia multivorans (strain ATCC 17616 / 249)).